Here is a 567-residue protein sequence, read N- to C-terminus: tRNA (uracil-O(2)-)-methyltransferase (567 aa).

Ser107 carries the phosphoserine modification.

This sequence belongs to the TRM44 family.

It localises to the cytoplasm. The enzyme catalyses uridine(44) in tRNA(Ser) + S-adenosyl-L-methionine = 2'-O-methyluridine(44) in tRNA(Ser) + S-adenosyl-L-homocysteine + H(+). TRNA (uracil-O(2)-)-methyltransferase, which catalyzes the formation of O(2)-methyluracil at position 44 (Um44) in tRNA(Ser). The sequence is that of tRNA (uracil-O(2)-)-methyltransferase (TRM44) from Saccharomyces cerevisiae (strain ATCC 204508 / S288c) (Baker's yeast).